Consider the following 426-residue polypeptide: 3-phosphoshikimate 1-carboxyvinyltransferase (426 aa).

3-phosphoshikimate is bound by residues Lys-22, Ser-23, and Arg-27. Phosphoenolpyruvate is bound at residue Lys-22. Gly-96 and Arg-124 together coordinate phosphoenolpyruvate. 3-phosphoshikimate-binding residues include Ser-170, Ser-171, Gln-172, Ser-198, Asp-314, Asn-337, and Lys-341. Gln-172 lines the phosphoenolpyruvate pocket. Asp-314 acts as the Proton acceptor in catalysis. 3 residues coordinate phosphoenolpyruvate: Arg-345, Arg-387, and Lys-412.

This sequence belongs to the EPSP synthase family. As to quaternary structure, monomer.

It is found in the cytoplasm. It catalyses the reaction 3-phosphoshikimate + phosphoenolpyruvate = 5-O-(1-carboxyvinyl)-3-phosphoshikimate + phosphate. The protein operates within metabolic intermediate biosynthesis; chorismate biosynthesis; chorismate from D-erythrose 4-phosphate and phosphoenolpyruvate: step 6/7. Catalyzes the transfer of the enolpyruvyl moiety of phosphoenolpyruvate (PEP) to the 5-hydroxyl of shikimate-3-phosphate (S3P) to produce enolpyruvyl shikimate-3-phosphate and inorganic phosphate. This Shewanella sp. (strain MR-7) protein is 3-phosphoshikimate 1-carboxyvinyltransferase.